A 468-amino-acid polypeptide reads, in one-letter code: MSAVMTPAGFTDFKVADISLAAWGRREIIIAESEMPALMGLRRKYAAEQPLKGAKILGCIHMTIQTAVLIETLIALGAEVRWSSCNIFSTQDQAAAAIAAAGIPVFAWKGETEEEYEWCIEQTILKDGQPWDANMVLDDGGDLTQILHDKYPQVLERVHGITEETTTGVHRLLDMLKGGTLKVPAINVNDSVTKSKNDNKYGCRHSLNDAIKRATDHLLSGKQALVIGYGDVGKGSAQSLRQEGMIVKVSEVDPICAMQACMDGFELVSPYKNGINDGTEASVDAALLGKIDLIVTTTGNVNVCDAGMLKALKKRAVVCNIGHFDNEIDTAFMRQNWGWEEVKPQVHKIHRTGKTVDPTNDDYLILLAEGRLVNLGNATGHPSRIMDGSFANQVLAQIHLYNEKFADLPVAEKTQNVTVMVLPKKLDEEVALEMVKGFGGVVTQLTAKQAEYIGVAVEGPFKPDSYRY.

Positions 63, 139, and 164 each coordinate substrate. Residue 165–167 participates in NAD(+) binding; that stretch reads TTT. Residues lysine 194 and aspartate 198 each contribute to the substrate site. NAD(+)-binding positions include asparagine 199, 228–233, glutamate 251, asparagine 300, 321–323, and asparagine 374; these read GYGDVG and IGH.

It belongs to the adenosylhomocysteinase family. NAD(+) is required as a cofactor.

It localises to the cytoplasm. It catalyses the reaction S-adenosyl-L-homocysteine + H2O = L-homocysteine + adenosine. It participates in amino-acid biosynthesis; L-homocysteine biosynthesis; L-homocysteine from S-adenosyl-L-homocysteine: step 1/1. May play a key role in the regulation of the intracellular concentration of adenosylhomocysteine. The protein is Adenosylhomocysteinase of Stutzerimonas stutzeri (strain A1501) (Pseudomonas stutzeri).